Reading from the N-terminus, the 95-residue chain is Translation initiation factor IF-1 (95 aa).

The S1-like domain maps to 1–72 (MAKEELIEMD…TKARITYRHK (72 aa)). A disordered region spans residues 70-95 (RHKVGGPPGPVTGGGNRPPPRQPRRR). The segment covering 86–95 (RPPPRQPRRR) has biased composition (pro residues).

Belongs to the IF-1 family. In terms of assembly, component of the 30S ribosomal translation pre-initiation complex which assembles on the 30S ribosome in the order IF-2 and IF-3, IF-1 and N-formylmethionyl-tRNA(fMet); mRNA recruitment can occur at any time during PIC assembly.

It is found in the cytoplasm. In terms of biological role, one of the essential components for the initiation of protein synthesis. Stabilizes the binding of IF-2 and IF-3 on the 30S subunit to which N-formylmethionyl-tRNA(fMet) subsequently binds. Helps modulate mRNA selection, yielding the 30S pre-initiation complex (PIC). Upon addition of the 50S ribosomal subunit IF-1, IF-2 and IF-3 are released leaving the mature 70S translation initiation complex. The chain is Translation initiation factor IF-1 from Rhodospirillum rubrum (strain ATCC 11170 / ATH 1.1.1 / DSM 467 / LMG 4362 / NCIMB 8255 / S1).